Reading from the N-terminus, the 59-residue chain is Large ribosomal subunit protein bL32 (59 aa).

The segment at 1 to 59 (MAVQQNKKSPSKRGMHRSHDHLSVAPLAVEPTTGETHLRHHVSPNGYYRGRKVIKTKND) is disordered. Composition is skewed to basic residues over residues 9 to 19 (SPSKRGMHRSH) and 49 to 59 (RGRKVIKTKND).

Belongs to the bacterial ribosomal protein bL32 family.

This chain is Large ribosomal subunit protein bL32, found in Cupriavidus metallidurans (strain ATCC 43123 / DSM 2839 / NBRC 102507 / CH34) (Ralstonia metallidurans).